We begin with the raw amino-acid sequence, 183 residues long: Ribosome maturation factor RimM (183 aa).

Residues 104–183 form the PRC barrel domain; sequence EGDYYWKDLM…TIEVDWDPGF (80 aa).

Belongs to the RimM family. As to quaternary structure, binds ribosomal protein uS19.

Its subcellular location is the cytoplasm. Its function is as follows. An accessory protein needed during the final step in the assembly of 30S ribosomal subunit, possibly for assembly of the head region. Essential for efficient processing of 16S rRNA. May be needed both before and after RbfA during the maturation of 16S rRNA. It has affinity for free ribosomal 30S subunits but not for 70S ribosomes. This Salmonella choleraesuis (strain SC-B67) protein is Ribosome maturation factor RimM.